The sequence spans 524 residues: MIDKDMNSACMRGGSVRTLNNYQQVMEPRSPHTAWQFGVSQIVKREPMDEDKNDSGVTSGSDFHSSSPSSDTSQDLQHSYQSPQTQPARFYSTPIVPHFAYNHNPLTPPNSEPLVSPKSEKEEKDMETTLTPCASPNRKPDDNQDHLRRLEMSLEKSGLFSSKTSEHSVDELSGKSDNDAEEYDEQSLRVPKVNSHGKIKTFKCKQCDFVAITKLEQWNHSKVHIREDKRLTCPKCPFITEYKHHLEYHLRNHAGSKPFQCNKCDYTCVNKSMLNSHMKSHSNVYRYSCRDCSYATKYCHSLKIHLRRYGHTPNVVLDEEGNPCPDIIIDVHGTRRGPKIKTQPKAEEAKPETLPFLNLQQQLPFPGYPFFGGFPNAQLLQQLIRERQLAVGGSQEESRVLDLSKPGCSYTGEQKSRRKGPAFKVDPTQVESEEEDEETSTTVFSNVEVVQEEAKKEESDSNNNNNKEEGNSCQYCNIAFGDAVLYTIHMGYHGFHNPFTCNMCGVECSDKVSFFLHIARVSHS.

Disordered regions lie at residues 42-86 (IVKR…PQTQ) and 101-187 (YNHN…DEQS). Residues 59 to 75 (SGSDFHSSSPSSDTSQD) are compositionally biased toward low complexity. Positions 76 to 86 (LQHSYQSPQTQ) are enriched in polar residues. Basic and acidic residues-rich tracts occupy residues 118-127 (KSEKEEKDME), 138-154 (RKPD…EMSL), and 164-178 (TSEH…KSDN). 4 consecutive C2H2-type zinc fingers follow at residues 202–224 (FKCK…SKVH), 231–253 (LTCP…LRNH), 259–281 (FQCN…MKSH), and 298–311 (YCHS…RYGH). Residues 402–442 (DLSKPGCSYTGEQKSRRKGPAFKVDPTQVESEEEDEETSTT) form a disordered region. 2 C2H2-type zinc fingers span residues 471–493 (NSCQ…MGYH) and 499–523 (FTCN…RVSH).

The protein belongs to the hunchback C2H2-type zinc-finger protein family.

The protein localises to the nucleus. In terms of biological role, gap class segmentation protein that controls development of head structures. The protein is Protein hunchback (hb) of Tribolium castaneum (Red flour beetle).